The primary structure comprises 345 residues: Uroporphyrinogen decarboxylase (345 aa).

Residues 26-30 (RQAGR), D76, Y151, S205, and H321 each bind substrate.

It belongs to the uroporphyrinogen decarboxylase family. In terms of assembly, homodimer.

The protein resides in the cytoplasm. The catalysed reaction is uroporphyrinogen III + 4 H(+) = coproporphyrinogen III + 4 CO2. It functions in the pathway porphyrin-containing compound metabolism; protoporphyrin-IX biosynthesis; coproporphyrinogen-III from 5-aminolevulinate: step 4/4. In terms of biological role, catalyzes the decarboxylation of four acetate groups of uroporphyrinogen-III to yield coproporphyrinogen-III. This is Uroporphyrinogen decarboxylase from Phenylobacterium zucineum (strain HLK1).